Consider the following 447-residue polypeptide: Phosphoglucosamine mutase (447 aa).

Ser-106 functions as the Phosphoserine intermediate in the catalytic mechanism. Residues Ser-106, Asp-245, Asp-247, and Asp-249 each coordinate Mg(2+). Ser-106 is subject to Phosphoserine.

This sequence belongs to the phosphohexose mutase family. It depends on Mg(2+) as a cofactor. In terms of processing, activated by phosphorylation.

It carries out the reaction alpha-D-glucosamine 1-phosphate = D-glucosamine 6-phosphate. In terms of biological role, catalyzes the conversion of glucosamine-6-phosphate to glucosamine-1-phosphate. The protein is Phosphoglucosamine mutase of Cupriavidus taiwanensis (strain DSM 17343 / BCRC 17206 / CCUG 44338 / CIP 107171 / LMG 19424 / R1) (Ralstonia taiwanensis (strain LMG 19424)).